Reading from the N-terminus, the 419-residue chain is Arginine biosynthesis bifunctional protein ArgJ 1, mitochondrial (419 aa).

Positions 177, 188, 275, 414, and 419 each coordinate substrate. Catalysis depends on T188, which acts as the Nucleophile.

It belongs to the ArgJ family. As to quaternary structure, heterodimer of an alpha and a beta chain. Post-translationally, the alpha and beta chains are autoproteolytically processed from a single precursor protein within the mitochondrion.

The protein resides in the mitochondrion matrix. It catalyses the reaction N(2)-acetyl-L-ornithine + L-glutamate = N-acetyl-L-glutamate + L-ornithine. The enzyme catalyses L-glutamate + acetyl-CoA = N-acetyl-L-glutamate + CoA + H(+). It participates in amino-acid biosynthesis; L-arginine biosynthesis; L-ornithine and N-acetyl-L-glutamate from L-glutamate and N(2)-acetyl-L-ornithine (cyclic): step 1/1. The protein operates within amino-acid biosynthesis; L-arginine biosynthesis; N(2)-acetyl-L-ornithine from L-glutamate: step 1/4. Functionally, catalyzes two activities which are involved in the cyclic version of arginine biosynthesis: the synthesis of acetylglutamate from glutamate and acetyl-CoA, and of ornithine by transacetylation between acetylornithine and glutamate. This is Arginine biosynthesis bifunctional protein ArgJ 1, mitochondrial from Sclerotinia sclerotiorum (strain ATCC 18683 / 1980 / Ss-1) (White mold).